The chain runs to 316 residues: Nod factor export ATP-binding protein I (316 aa).

An ABC transporter domain is found at 18–248 (IDFSDVSKTY…LIGCEVIEIY (231 aa)). 50 to 57 (GPNGAGKS) is an ATP binding site.

The protein belongs to the ABC transporter superfamily. Lipooligosaccharide exporter (TC 3.A.1.102) family. The complex is composed of two ATP-binding proteins (NodI) and two transmembrane proteins (NodJ).

It localises to the cell inner membrane. Part of the ABC transporter complex NodIJ involved in the export of the nodulation factors (Nod factors), the bacterial signal molecules that induce symbiosis and subsequent nodulation induction. Nod factors are LCO (lipo-chitin oligosaccharide), a modified beta-1,4-linked N-acetylglucosamine oligosaccharide. This subunit is responsible for energy coupling to the transport system. This Rhizobium etli (strain ATCC 51251 / DSM 11541 / JCM 21823 / NBRC 15573 / CFN 42) protein is Nod factor export ATP-binding protein I.